The chain runs to 319 residues: Serine acetyltransferase, plasmid (319 aa).

It belongs to the transferase hexapeptide repeat family.

Its subcellular location is the cytoplasm. It carries out the reaction L-serine + acetyl-CoA = O-acetyl-L-serine + CoA. Its pathway is amino-acid biosynthesis; L-cysteine biosynthesis; L-cysteine from L-serine: step 1/2. The polypeptide is Serine acetyltransferase, plasmid (srpH) (Synechococcus elongatus (strain ATCC 33912 / PCC 7942 / FACHB-805) (Anacystis nidulans R2)).